Reading from the N-terminus, the 313-residue chain is Olfactory receptor 8B2 (313 aa).

Topologically, residues 1 to 25 (MLARNNSLVTEFILAGLTDHPEFRQ) are extracellular. N5 carries an N-linked (GlcNAc...) asparagine glycan. The helical transmembrane segment at 26 to 46 (PLFFLFLVIYIVTMVGNLGLI) threads the bilayer. At 47–54 (TLFGLNSH) the chain is on the cytoplasmic side. A helical membrane pass occupies residues 55–75 (LHTPMYYFLFNLSFIDLCYSS). Over 76-99 (VFTPKMLMNFVSKKNIISNVGCMT) the chain is Extracellular. Cysteines 97 and 189 form a disulfide. Residues 100–120 (RLFFFLFFVISECYMLTSMAY) traverse the membrane as a helical segment. Residues 121–139 (DRYVAICNPLLYKVTMSHQ) lie on the Cytoplasmic side of the membrane. A helical transmembrane segment spans residues 140–160 (VCSMLTFAAYIMGLAGATAHT). The Extracellular segment spans residues 161–197 (GCMLRLTFCSANIINHYLCDILPLLQLSCTSTYVNEV). A helical transmembrane segment spans residues 198–217 (VVLIVVGTNITVPSCTILIS). Residues 218 to 237 (YVFIVTSILHIKSTQGRSKA) lie on the Cytoplasmic side of the membrane. A helical transmembrane segment spans residues 238 to 258 (FSTCSSHVIALSLFFGSAAFM). The Extracellular portion of the chain corresponds to 259–270 (YIKYSSGSMEQG). A helical membrane pass occupies residues 271–291 (KVSSVFYTNVVPMLNPLIYSL). The Cytoplasmic segment spans residues 292–313 (RNKDVKVALRKALIKIQRRNIF).

This sequence belongs to the G-protein coupled receptor 1 family.

Its subcellular location is the cell membrane. Functionally, odorant receptor. The chain is Olfactory receptor 8B2 (OR8B2) from Homo sapiens (Human).